Reading from the N-terminus, the 273-residue chain is GDNF family receptor alpha-4 (273 aa).

N192 carries an N-linked (GlcNAc...) asparagine glycan. The GPI-anchor amidated asparagine moiety is linked to residue N250. Residues A251–L273 constitute a propeptide, removed in mature form.

Belongs to the GDNFR family. As to quaternary structure, interacts with ARTN ligand and RET: forms a 2:2:2 ternary complex composed of ARTN ligand, GFRA3 and RET receptor. Interacts with SORL1. Weakly expressed in heart, brain and testis.

The protein localises to the cell membrane. The protein resides in the secreted. Receptor for persephin (PSPN), a growth factor that exhibits neurotrophic activity on mesencephalic dopaminergic and motor neurons. Acts by binding to its coreceptor, GFRA4, leading to autophosphorylation and activation of the RET receptor. May be important in C-cell development and, in the postnatal development of the adrenal medulla. This Rattus norvegicus (Rat) protein is GDNF family receptor alpha-4 (Gfra4).